The sequence spans 447 residues: ATP-dependent protease ATPase subunit HslU (447 aa).

ATP is bound by residues I17, 59-64, D256, E321, and R393; that span reads GVGKTE.

Belongs to the ClpX chaperone family. HslU subfamily. A double ring-shaped homohexamer of HslV is capped on each side by a ring-shaped HslU homohexamer. The assembly of the HslU/HslV complex is dependent on binding of ATP.

The protein localises to the cytoplasm. Functionally, ATPase subunit of a proteasome-like degradation complex; this subunit has chaperone activity. The binding of ATP and its subsequent hydrolysis by HslU are essential for unfolding of protein substrates subsequently hydrolyzed by HslV. HslU recognizes the N-terminal part of its protein substrates and unfolds these before they are guided to HslV for hydrolysis. This chain is ATP-dependent protease ATPase subunit HslU, found in Pseudomonas putida (strain W619).